The primary structure comprises 144 residues: 3-dehydroquinate dehydratase (144 aa).

Residue Tyr-22 is the Proton acceptor of the active site. Positions 73, 79, and 86 each coordinate substrate. His-99 (proton donor) is an active-site residue. Substrate is bound by residues 100–101 (LS) and Arg-110.

The protein belongs to the type-II 3-dehydroquinase family. In terms of assembly, homododecamer.

The enzyme catalyses 3-dehydroquinate = 3-dehydroshikimate + H2O. It participates in metabolic intermediate biosynthesis; chorismate biosynthesis; chorismate from D-erythrose 4-phosphate and phosphoenolpyruvate: step 3/7. Functionally, catalyzes a trans-dehydration via an enolate intermediate. The sequence is that of 3-dehydroquinate dehydratase from Trichlorobacter lovleyi (strain ATCC BAA-1151 / DSM 17278 / SZ) (Geobacter lovleyi).